The chain runs to 339 residues: Glycerol-3-phosphate dehydrogenase [NAD(P)+] (339 aa).

Residues serine 15, tyrosine 16, histidine 36, and lysine 110 each contribute to the NADPH site. Positions 110, 139, and 141 each coordinate sn-glycerol 3-phosphate. Alanine 143 lines the NADPH pocket. Residues lysine 195, aspartate 248, serine 258, arginine 259, and asparagine 260 each contribute to the sn-glycerol 3-phosphate site. Residue lysine 195 is the Proton acceptor of the active site. Arginine 259 contacts NADPH. NADPH contacts are provided by valine 283 and glutamate 285.

The protein belongs to the NAD-dependent glycerol-3-phosphate dehydrogenase family.

It localises to the cytoplasm. It carries out the reaction sn-glycerol 3-phosphate + NAD(+) = dihydroxyacetone phosphate + NADH + H(+). The enzyme catalyses sn-glycerol 3-phosphate + NADP(+) = dihydroxyacetone phosphate + NADPH + H(+). The protein operates within membrane lipid metabolism; glycerophospholipid metabolism. Functionally, catalyzes the reduction of the glycolytic intermediate dihydroxyacetone phosphate (DHAP) to sn-glycerol 3-phosphate (G3P), the key precursor for phospholipid synthesis. The protein is Glycerol-3-phosphate dehydrogenase [NAD(P)+] of Escherichia coli O17:K52:H18 (strain UMN026 / ExPEC).